Reading from the N-terminus, the 212-residue chain is GTP-binding protein EngB (212 aa).

Residues 36-212 enclose the EngB-type G domain; sequence TAPEVAFAGR…LRAAVYDAII (177 aa). GTP-binding positions include 44 to 51, 71 to 75, 91 to 94, 158 to 161, and 192 to 194; these read GRSNVGKS, GRTQE, DMPG, TKSD, and TSS. Serine 51 and threonine 73 together coordinate Mg(2+).

The protein belongs to the TRAFAC class TrmE-Era-EngA-EngB-Septin-like GTPase superfamily. EngB GTPase family. Requires Mg(2+) as cofactor.

Functionally, necessary for normal cell division and for the maintenance of normal septation. This chain is GTP-binding protein EngB, found in Zymomonas mobilis subsp. mobilis (strain ATCC 31821 / ZM4 / CP4).